The sequence spans 579 residues: Membrane protein insertase YidC (579 aa).

A helical transmembrane segment spans residues 10 to 30 (LVIVTILSALILFGWSFVTKH). Positions 35-61 (PPAPTQQGKNQPKAELTAEESGDKPLK) are disordered. The next 5 helical transmembrane spans lie at 330-350 (FDKA…FYYL), 351-371 (DWLF…VFTI), 423-443 (VNPF…IALY), 478-498 (LLHF…ILGI), and 523-543 (PLIS…YYIF). The segment covering 560 to 572 (STPEERQDRAERK) has biased composition (basic and acidic residues). The interval 560–579 (STPEERQDRAERKRPSKKKA) is disordered.

The protein belongs to the OXA1/ALB3/YidC family. Type 1 subfamily. Interacts with the Sec translocase complex via SecD. Specifically interacts with transmembrane segments of nascent integral membrane proteins during membrane integration.

It localises to the cell inner membrane. Functionally, required for the insertion and/or proper folding and/or complex formation of integral membrane proteins into the membrane. Involved in integration of membrane proteins that insert both dependently and independently of the Sec translocase complex, as well as at least some lipoproteins. Aids folding of multispanning membrane proteins. This chain is Membrane protein insertase YidC, found in Zymomonas mobilis subsp. mobilis (strain ATCC 31821 / ZM4 / CP4).